Consider the following 178-residue polypeptide: Large ribosomal subunit protein uL13m (178 aa).

It belongs to the universal ribosomal protein uL13 family. In terms of assembly, component of the mitochondrial ribosome large subunit (39S) which comprises a 16S rRNA and about 50 distinct proteins.

It localises to the mitochondrion. This Drosophila melanogaster (Fruit fly) protein is Large ribosomal subunit protein uL13m (mRpL13).